An 89-amino-acid chain; its full sequence is Cell division topological specificity factor (89 aa).

It belongs to the MinE family.

Its function is as follows. Prevents the cell division inhibition by proteins MinC and MinD at internal division sites while permitting inhibition at polar sites. This ensures cell division at the proper site by restricting the formation of a division septum at the midpoint of the long axis of the cell. The protein is Cell division topological specificity factor of Edwardsiella ictaluri (strain 93-146).